The sequence spans 589 residues: Carbonic anhydrase (589 aa).

2 Alpha-carbonic anhydrase domains span residues 59 to 316 (HDYN…YEYK) and 321 to 585 (DKYN…YGYN). Substrate is bound at residue 258–259 (TT). Residues 390 to 589 (MQINFGDPPA…TVYGYNGAAA (200 aa)) are catalytic. Residues H420, H422, and H440 each coordinate Zn(2+).

It belongs to the alpha-carbonic anhydrase family. It depends on Zn(2+) as a cofactor.

It catalyses the reaction hydrogencarbonate + H(+) = CO2 + H2O. Reversible hydration of carbon dioxide. The protein is Carbonic anhydrase (DCA) of Dunaliella salina (Green alga).